A 612-amino-acid chain; its full sequence is Peroxisomal targeting signal receptor (612 aa).

The residue at position 1 (Met-1) is an N-acetylmethionine. Residues 1-24 form a disordered region; sequence MDVGSCSVGNNPLAQLHKHTQQNK. A Glycyl cysteine thioester (Cys-Gly) (interchain with G-Cter in ubiquitin) cross-link involves residue Cys-6. The interval 7–29 is amphipathic helix 1 (AH1); the sequence is SVGNNPLAQLHKHTQQNKSLQFN. Residues Lys-18 and Lys-24 each participate in a glycyl lysine isopeptide (Lys-Gly) (interchain with G-Cter in ubiquitin) cross-link. Ser-61 bears the Phosphoserine mark. A TPR 1 repeat occupies 64–97; the sequence is NMANMQRFINGEPLIDDKRRMEIGPSSGRLPPFS. The segment at 70–104 is amphipathic helix 2 (AH2); the sequence is RFINGEPLIDDKRRMEIGPSSGRLPPFSNVHSLQT. Residues 120-124 carry the WxxxF/Y motif 1 motif; the sequence is WSQEF. The tract at residues 129 to 151 is disordered; sequence SIQNRNADTGNSEKAWQRGSTTA. Positions 158-174 are amphipathic helix 3 (AH3); it reads PNTMMNNYAYASMNSLS. The tract at residues 182-202 is disordered; that stretch reads AFMNQQQSGRSKEGVNEQEQQ. A WxxxF/Y motif 2 motif is present at residues 204–208; sequence WTDQF. The segment at 257-273 is amphipathic helix 4 (AH4); the sequence is FQEVWDSIHKDAEEVLP. TPR repeat units lie at residues 313–346, 347–380, 381–418, 419–456, 457–490, 491–524, and 525–558; these read PNAY…KPDH, VDAW…DPKN, LEAM…IWSR, IKQQ…STID, PEIQ…NPND, ELMW…KPSF, and VRAR…HEVN.

Belongs to the peroxisomal targeting signal receptor family. In terms of assembly, interacts (via WxxxF/Y and LVxEF motifs) with PEX14; promoting translocation through the PEX13-PEX14 docking complex. In terms of processing, monoubiquitinated at Cys-6 by PEX2 during PEX5 passage through the retrotranslocation channel: monoubiquitination acts as a signal for PEX5 extraction and is required for proper export from peroxisomes and recycling. Ubiquitination at Cys-6 is UBC4-independent but requires the presence of PEX4. When PEX5 recycling is compromised, polyubiquitinated at Lys-18 and Lys-24 by PEX10 during its passage through the retrotranslocation channel, leading to its degradation. Ubiquitination at Lys-18 and Lys-24 are UBC4-dependent. Monoubiquitination at Cys-6 and polyubiquitination at Lys-18 and Lys-24 are removed by UBP15 in the cytosol, resetting PEX5 for a subsequent import cycle.

It is found in the cytoplasm. It localises to the cytosol. The protein resides in the peroxisome matrix. Its function is as follows. Receptor that mediates peroxisomal import of proteins containing a C-terminal PTS1-type tripeptide peroxisomal targeting signal (SKL-type). Binds to cargo proteins containing a PTS1 peroxisomal targeting signal in the cytosol, and translocates them into the peroxisome matrix by passing through the PEX13-PEX14 docking complex along with cargo proteins. PEX5 receptor is then retrotranslocated into the cytosol, leading to release of bound cargo in the peroxisome matrix, and reset for a subsequent peroxisome import cycle. This Saccharomyces cerevisiae (strain ATCC 204508 / S288c) (Baker's yeast) protein is Peroxisomal targeting signal receptor.